Reading from the N-terminus, the 520-residue chain is Bifunctional purine biosynthesis protein PurH (520 aa).

The MGS-like domain maps to 1 to 146 (MAPVALLSVS…KNHADVAVLT (146 aa)).

It belongs to the PurH family.

The catalysed reaction is (6R)-10-formyltetrahydrofolate + 5-amino-1-(5-phospho-beta-D-ribosyl)imidazole-4-carboxamide = 5-formamido-1-(5-phospho-D-ribosyl)imidazole-4-carboxamide + (6S)-5,6,7,8-tetrahydrofolate. It catalyses the reaction IMP + H2O = 5-formamido-1-(5-phospho-D-ribosyl)imidazole-4-carboxamide. It participates in purine metabolism; IMP biosynthesis via de novo pathway; 5-formamido-1-(5-phospho-D-ribosyl)imidazole-4-carboxamide from 5-amino-1-(5-phospho-D-ribosyl)imidazole-4-carboxamide (10-formyl THF route): step 1/1. Its pathway is purine metabolism; IMP biosynthesis via de novo pathway; IMP from 5-formamido-1-(5-phospho-D-ribosyl)imidazole-4-carboxamide: step 1/1. This is Bifunctional purine biosynthesis protein PurH from Synechococcus sp. (strain CC9902).